Reading from the N-terminus, the 231-residue chain is Monothiol glutaredoxin-6 (231 aa).

Residues 1 to 29 (MIPSNKRNARILSITTLLLLLVFFVAQNA) form the signal peptide. The 104-residue stretch at 116-219 (QKEYSLILDL…ESLQVWSDGK (104 aa)) folds into the Glutaredoxin domain. A [2Fe-2S] cluster-binding site is contributed by Cys136.

This sequence belongs to the glutaredoxin family. Monothiol subfamily.

The protein resides in the vacuole. The chain is Monothiol glutaredoxin-6 (GRX6) from Saccharomyces cerevisiae (strain ATCC 204508 / S288c) (Baker's yeast).